The following is a 445-amino-acid chain: 3-phosphoshikimate 1-carboxyvinyltransferase (445 aa).

3-phosphoshikimate contacts are provided by K21, S22, and R26. Residue K21 participates in phosphoenolpyruvate binding. Positions 92 and 120 each coordinate phosphoenolpyruvate. S165, Q166, D307, and K334 together coordinate 3-phosphoshikimate. Q166 serves as a coordination point for phosphoenolpyruvate. D307 serves as the catalytic Proton acceptor. 3 residues coordinate phosphoenolpyruvate: R338, R379, and K405.

Belongs to the EPSP synthase family. As to quaternary structure, monomer.

It localises to the cytoplasm. The catalysed reaction is 3-phosphoshikimate + phosphoenolpyruvate = 5-O-(1-carboxyvinyl)-3-phosphoshikimate + phosphate. It functions in the pathway metabolic intermediate biosynthesis; chorismate biosynthesis; chorismate from D-erythrose 4-phosphate and phosphoenolpyruvate: step 6/7. Catalyzes the transfer of the enolpyruvyl moiety of phosphoenolpyruvate (PEP) to the 5-hydroxyl of shikimate-3-phosphate (S3P) to produce enolpyruvyl shikimate-3-phosphate and inorganic phosphate. The chain is 3-phosphoshikimate 1-carboxyvinyltransferase from Chlamydia pneumoniae (Chlamydophila pneumoniae).